The following is a 142-amino-acid chain: MAKKVTGYLKLQVPAGAANPSPPIGPALGQRGLNIMEFCKAFNAQTQKEEKNTPIPVVITIYADRSFTFEMKTPPMAYFLKQAAKIQSGSKAPGRDSAGQVTKAQVREIAEKKMKDLNCDTVEAAMSMVEGSARSMGLQVAE.

The protein belongs to the universal ribosomal protein uL11 family. In terms of assembly, part of the ribosomal stalk of the 50S ribosomal subunit. Interacts with L10 and the large rRNA to form the base of the stalk. L10 forms an elongated spine to which L12 dimers bind in a sequential fashion forming a multimeric L10(L12)X complex. In terms of processing, one or more lysine residues are methylated.

Forms part of the ribosomal stalk which helps the ribosome interact with GTP-bound translation factors. The polypeptide is Large ribosomal subunit protein uL11 (Nitrobacter hamburgensis (strain DSM 10229 / NCIMB 13809 / X14)).